The chain runs to 197 residues: Double homeobox protein 5 (197 aa).

2 consecutive DNA-binding regions (homeobox) follow at residues 46–105 (GRRM…LRQH) and 121–180 (GRRK…RGQS). A disordered region spans residues 101–127 (QLRQHRRQSRPWPGRRDPQKGRRKRTA).

The protein belongs to the paired homeobox family. Expressed in hepatoma Hep3B cells.

The protein resides in the nucleus. The chain is Double homeobox protein 5 (DUX5) from Homo sapiens (Human).